Here is a 374-residue protein sequence, read N- to C-terminus: Phenoloxidase-activating enzyme 1 (374 aa).

The N-terminal stretch at 1–19 (MWKSLVFFVSALIWSFGSS) is a signal peptide. The propeptide at 20–120 (QDCTTPTGSR…QCGIDTTGDR (101 aa)) is activation peptide. One can recognise a Clip domain in the interval 21-74 (DCTTPTGSRSNCVSLYQCQPLYNAFEQRPLPTHVVSYLGRSQCGFEGYVPRVCC). Disulfide bonds link cysteine 22–cysteine 73, cysteine 32–cysteine 63, and cysteine 38–cysteine 74. Polar residues predominate over residues 83–97 (ATSARPTQAPTQGSS). The segment at 83–114 (ATSARPTQAPTQGSSDVFPEDSSPAPRNQCGI) is disordered. The Peptidase S1 domain occupies 121–370 (VYGGTITDLD…YIDWIQNTIA (250 aa)). Cysteines 151 and 167 form a disulfide. Catalysis depends on histidine 166, which acts as the Charge relay system. Positions 186 and 194 each coordinate Ca(2+). Aspartate 228 functions as the Charge relay system in the catalytic mechanism. Cystine bridges form between cysteine 292-cysteine 307 and cysteine 317-cysteine 346. The Charge relay system role is filled by serine 321.

Belongs to the peptidase S1 family. CLIP subfamily. Post-translationally, activated by the removal of the N-terminal inhibitory propeptide. Expressed in hemocytes.

The protein localises to the secreted. With respect to regulation, inhibited by aprotenin. Not inhibited by EDTA, PMSF or leupeptin. Functionally, serine protease which, by cleaving and activating prophenoloxidase (PPO1) after immune challenge, plays an essential role in the melanization immune response to wounding. This Spodoptera litura (Asian cotton leafworm) protein is Phenoloxidase-activating enzyme 1.